The following is a 21-amino-acid chain: MPNISEIIDSINRRSMAEIIT.

This is an uncharacterized protein from Methanococcus voltae.